The sequence spans 382 residues: uncharacterized protein (382 aa).

A run of 12 helical transmembrane segments spans residues 8 to 28, 39 to 61, 75 to 95, 102 to 122, 131 to 151, 157 to 177, 204 to 224, 236 to 256, 265 to 284, 289 to 311, 325 to 345, and 349 to 369; these read VLLL…LNTL, PTWQ…TLLT, YLAS…VGFW, FIAG…LMCS, LLAA…LMIS, LMSV…PLLF, LGVN…GLMP, GIGF…WPIG, LLVL…AMLG, APAL…AWAC, ALLL…AMLM, and SDNL…LMLL.

It belongs to the major facilitator superfamily. YcaD (TC 2.A.1.26) family.

It is found in the cell inner membrane. This is an uncharacterized protein from Enterobacter sp. (strain 638).